Consider the following 455-residue polypeptide: L-serine dehydratase (455 aa).

Belongs to the iron-sulfur dependent L-serine dehydratase family. [4Fe-4S] cluster is required as a cofactor.

It catalyses the reaction L-serine = pyruvate + NH4(+). It participates in carbohydrate biosynthesis; gluconeogenesis. This chain is L-serine dehydratase (sdaA), found in Streptomyces coelicolor (strain ATCC BAA-471 / A3(2) / M145).